The following is a 333-amino-acid chain: Transaldolase (333 aa).

K136 (schiff-base intermediate with substrate) is an active-site residue.

The protein belongs to the transaldolase family. Type 1 subfamily. In terms of assembly, homodimer.

It localises to the cytoplasm. It catalyses the reaction D-sedoheptulose 7-phosphate + D-glyceraldehyde 3-phosphate = D-erythrose 4-phosphate + beta-D-fructose 6-phosphate. Its pathway is carbohydrate degradation; pentose phosphate pathway; D-glyceraldehyde 3-phosphate and beta-D-fructose 6-phosphate from D-ribose 5-phosphate and D-xylulose 5-phosphate (non-oxidative stage): step 2/3. Its function is as follows. Transaldolase is important for the balance of metabolites in the pentose-phosphate pathway. This chain is Transaldolase, found in Acidobacterium capsulatum (strain ATCC 51196 / DSM 11244 / BCRC 80197 / JCM 7670 / NBRC 15755 / NCIMB 13165 / 161).